We begin with the raw amino-acid sequence, 250 residues long: 5'-nucleotidase SurE (250 aa).

4 residues coordinate a divalent metal cation: Asp9, Asp10, Ser40, and Asn92.

Belongs to the SurE nucleotidase family. A divalent metal cation serves as cofactor.

The protein localises to the cytoplasm. The catalysed reaction is a ribonucleoside 5'-phosphate + H2O = a ribonucleoside + phosphate. Its function is as follows. Nucleotidase that shows phosphatase activity on nucleoside 5'-monophosphates. The protein is 5'-nucleotidase SurE of Shewanella pealeana (strain ATCC 700345 / ANG-SQ1).